The following is a 293-amino-acid chain: Phosphatidylglycerol--prolipoprotein diacylglyceryl transferase (293 aa).

4 helical membrane passes run 4 to 24, 45 to 65, 81 to 101, and 115 to 135; these read ILAF…LFIF, FELR…YFVA, ELIF…YVLF, and IWEG…TGFL. A 1,2-diacyl-sn-glycero-3-phospho-(1'-sn-glycerol) is bound at residue R165. A run of 3 helical transmembrane segments spans residues 204-224, 231-249, and 262-282; these read PTFL…SVYF, HGEV…RIVI, and IKAA…GFLI.

This sequence belongs to the Lgt family.

The protein resides in the cell inner membrane. It carries out the reaction L-cysteinyl-[prolipoprotein] + a 1,2-diacyl-sn-glycero-3-phospho-(1'-sn-glycerol) = an S-1,2-diacyl-sn-glyceryl-L-cysteinyl-[prolipoprotein] + sn-glycerol 1-phosphate + H(+). Its pathway is protein modification; lipoprotein biosynthesis (diacylglyceryl transfer). Functionally, catalyzes the transfer of the diacylglyceryl group from phosphatidylglycerol to the sulfhydryl group of the N-terminal cysteine of a prolipoprotein, the first step in the formation of mature lipoproteins. The sequence is that of Phosphatidylglycerol--prolipoprotein diacylglyceryl transferase from Thermotoga petrophila (strain ATCC BAA-488 / DSM 13995 / JCM 10881 / RKU-1).